A 262-amino-acid polypeptide reads, in one-letter code: Putative carbamate hydrolase RutD (262 aa).

Belongs to the AB hydrolase superfamily. Hydrolase RutD family.

The catalysed reaction is carbamate + 2 H(+) = NH4(+) + CO2. Its function is as follows. Involved in pyrimidine catabolism. May facilitate the hydrolysis of carbamate, a reaction that can also occur spontaneously. The polypeptide is Putative carbamate hydrolase RutD (Rhizobium rhizogenes (strain K84 / ATCC BAA-868) (Agrobacterium radiobacter)).